The chain runs to 372 residues: MGCNNTALDNCMLPNLSIATAPLDLRFAFSTPLRMLLAIIMILMIAIAFLGNAIVCLIVYQKPAMRSAINLLLATLAFSDIMLSLFCMPFTAVTIITGSWLFGTQFCQISAMLYWFFVLEGVAILLIISVDRFLIIVQRQDKLNPHRAKIMIAASWVLSFCISLPSVVGWTLVEVPTRAPQCVLGYTEFSADRVYAVMLIVAVFFIPFSVMLYSYLCILNTVRRNAVRIHTHADSLCLSQVSKLGLMGLQRPHQMNVDMSFKTRAFTTILILFIGFSLCWLPHSVFSLLSVFSRTFYYSSSFYSISTCTLWLTYLKSVFNPVIYCWRIKKFREACLEFMPKTFKILPNVRGRTRRRIRPSTIYVCGEHQSAV.

Over Met1–Ala38 the chain is Extracellular. N-linked (GlcNAc...) asparagine glycans are attached at residues Asn4 and Asn15. Residues Ile39 to Val59 traverse the membrane as a helical segment. Residues Tyr60 to Asp80 are Cytoplasmic-facing. Residues Ile81–Leu101 form a helical membrane-spanning segment. The Extracellular portion of the chain corresponds to Phe102–Gln108. The chain crosses the membrane as a helical span at residues Ile109–Ser129. The Cytoplasmic segment spans residues Val130–Lys149. The helical transmembrane segment at Ile150–Trp170 threads the bilayer. Over Thr171 to Met198 the chain is Extracellular. The chain crosses the membrane as a helical span at residues Leu199–Leu219. The Cytoplasmic portion of the chain corresponds to Asn220–Thr268. A helical transmembrane segment spans residues Ile269 to Leu289. Topologically, residues Ser290–Ser301 are extracellular. Residues Phe302 to Tyr324 form a helical membrane-spanning segment. The Cytoplasmic portion of the chain corresponds to Cys325–Val372.

This sequence belongs to the G-protein coupled receptor 1 family. As to expression, ubiquitously expressed.

Its subcellular location is the cell membrane. Functionally, highly selective receptor for lysophosphatidic acid (LPA), a mediator of diverse cellular activities. This Xenopus laevis (African clawed frog) protein is High-affinity lysophosphatidic acid receptor.